The sequence spans 706 residues: Sodium- and chloride-dependent glycine transporter 1 (706 aa).

The tract at residues 1–26 (MSGGDTRAAIARPRMAAAHGPVAPSS) is disordered. Topologically, residues 1–108 (MSGGDTRAAI…KRGNWGNQIE (108 aa)) are cytoplasmic. Over residues 7–18 (RAAIARPRMAAA) the composition is skewed to low complexity. Helical transmembrane passes span 109 to 129 (FVLT…FPYL), 136 to 156 (GAFM…LFFM), and 188 to 208 (VSTY…YYFF). Residues 209–285 (SSMTHVLPWA…LSDDIGNFGE (77 aa)) are Extracellular-facing. The next 9 helical transmembrane spans lie at 286-306 (VRLP…LCLI), 315-335 (VVYF…VRGV), 360-380 (VWGD…GGLI), 407-427 (SVYA…HLGV), 450-470 (LLPI…LLGL), 506-526 (VAGF…WLLL), 530-550 (YAAS…IMYI), 570-590 (LFFQ…ILVF), and 610-630 (VAIG…YAMF). Residues 631-706 (RLCRTDGDTL…GSSRLQDSRI (76 aa)) lie on the Cytoplasmic side of the membrane. Phosphoserine is present on residues Ser-673 and Ser-698. The tract at residues 695–706 (SNGSSRLQDSRI) is essential for interaction with EXOC1.

It belongs to the sodium:neurotransmitter symporter (SNF) (TC 2.A.22) family. SLC6A9 subfamily. As to quaternary structure, interacts with EXOC1; interaction increases the transporter capacity of SLC6A9 probably by promoting its insertion into the cell membrane. Interacts with EXOC3 and EXOC4. As to expression, expressed in the brain, kidney, pancreas, lung, placenta and liver. Expressed only in the brain.

It localises to the cell membrane. The enzyme catalyses glycine(out) + chloride(out) + 2 Na(+)(out) = glycine(in) + chloride(in) + 2 Na(+)(in). Its activity is regulated as follows. Inhibited by sarcosine. Sodium- and chloride-dependent glycine transporter. Essential for regulating glycine concentrations at inhibitory glycinergic synapses. In terms of biological role, sodium- and chloride-dependent glycine transporter. The polypeptide is Sodium- and chloride-dependent glycine transporter 1 (SLC6A9) (Homo sapiens (Human)).